Reading from the N-terminus, the 136-residue chain is Histone H3.1/H3.2 (136 aa).

Residues 1 to 43 (MARTKQTARKSTGGKAPRKQLASKAARKSAPSTGGVKKPHRYK) form a disordered region. Position 5 is an N6,N6,N6-trimethyllysine; alternate (Lys-5). At Lys-5 the chain carries N6,N6-dimethyllysine; alternate. N6-methyllysine; alternate occurs at positions 5 and 10. Residue Lys-10 is modified to N6-acetyllysine; alternate. A Phosphoserine modification is found at Ser-11. Residue Lys-15 is modified to N6,N6-dimethyllysine; alternate. N6-acetyllysine; alternate is present on residues Lys-15, Lys-19, Lys-24, Lys-28, and Lys-37. Residues Lys-19, Lys-24, Lys-28, and Lys-37 each carry the N6-methyllysine; alternate modification. N6,N6,N6-trimethyllysine; alternate occurs at positions 28 and 37. An N6,N6-dimethyllysine; alternate mark is found at Lys-28 and Lys-37. N6-acetyllysine is present on residues Lys-57 and Lys-65. Lys-80 carries the post-translational modification N6,N6,N6-trimethyllysine; alternate. Residue Lys-80 is modified to N6,N6-dimethyllysine; alternate. The residue at position 80 (Lys-80) is an N6-methyllysine; alternate.

It belongs to the histone H3 family. In terms of assembly, the nucleosome is a histone octamer containing two molecules each of H2A, H2B, H3 and H4 assembled in one H3-H4 heterotetramer and two H2A-H2B heterodimers. The octamer wraps approximately 147 bp of DNA. Phosphorylated to form H3S10ph. H3S10ph promotes subsequent H3K14ac formation and is required for transcriptional activation through TBP recruitment to the promoters. In terms of processing, mono-, di- and trimethylated by the COMPASS complex to form H3K4me1/2/3. H3K4me activates gene expression by regulating transcription elongation and plays a role in telomere length maintenance. H3K4me enrichment correlates with transcription levels, and occurs in a 5' to 3' gradient with H3K4me3 enrichment at the 5'-end of genes, shifting to H3K4me2 and then H3K4me1. Methylated by SET2 to form H3K36me. H3K36me represses gene expression. Methylated by DOT1 to form H3K79me. H3K79me is required for association of SIR proteins with telomeric regions and for telomeric silencing. The COMPASS-mediated formation of H3K4me2/3 and the DOT1-mediated formation of H3K79me require H2BK123ub1. Post-translationally, acetylation of histone H3 leads to transcriptional activation. H3K14ac formation by GCN5 is promoted by H3S10ph. H3K14ac can also be formed by ESA1. H3K56ac formation occurs predominantly in newly synthesized H3 molecules during G1, S and G2/M of the cell cycle and may be involved in DNA repair.

It is found in the nucleus. The protein resides in the chromosome. Its function is as follows. Core component of nucleosome. Nucleosomes wrap and compact DNA into chromatin, limiting DNA accessibility to the cellular machineries which require DNA as a template. Histones thereby play a central role in transcription regulation, DNA repair, DNA replication and chromosomal stability. DNA accessibility is regulated via a complex set of post-translational modifications of histones, also called histone code, and nucleosome remodeling. This is Histone H3.1/H3.2 (HHT1) from Meyerozyma guilliermondii (strain ATCC 6260 / CBS 566 / DSM 6381 / JCM 1539 / NBRC 10279 / NRRL Y-324) (Yeast).